Here is a 259-residue protein sequence, read N- to C-terminus: Phosphatidylglycerol--prolipoprotein diacylglyceryl transferase (259 aa).

4 helical membrane-spanning segments follow: residues 10-30 (IGLL…LFAY), 50-70 (IISW…ILFY), 86-106 (WKGG…MYIF), and 112-132 (IKFL…IFLG). Arg-133 contacts a 1,2-diacyl-sn-glycero-3-phospho-(1'-sn-glycerol). Transmembrane regions (helical) follow at residues 169-189 (LYEA…LFFF), 197-217 (GMLF…IEFV), and 227-247 (ILFN…ILGI).

It belongs to the Lgt family.

The protein localises to the cell inner membrane. It carries out the reaction L-cysteinyl-[prolipoprotein] + a 1,2-diacyl-sn-glycero-3-phospho-(1'-sn-glycerol) = an S-1,2-diacyl-sn-glyceryl-L-cysteinyl-[prolipoprotein] + sn-glycerol 1-phosphate + H(+). It participates in protein modification; lipoprotein biosynthesis (diacylglyceryl transfer). Catalyzes the transfer of the diacylglyceryl group from phosphatidylglycerol to the sulfhydryl group of the N-terminal cysteine of a prolipoprotein, the first step in the formation of mature lipoproteins. The chain is Phosphatidylglycerol--prolipoprotein diacylglyceryl transferase from Ehrlichia ruminantium (strain Welgevonden).